Reading from the N-terminus, the 217-residue chain is Translation initiation factor IF-3 (217 aa).

A disordered region spans residues 170-217 (KKTEAMAEARQAQEARKADAKANPGKSQNAAETDDAEAEAPAEAPAEA). The segment covering 172 to 189 (TEAMAEARQAQEARKADA) has biased composition (basic and acidic residues).

This sequence belongs to the IF-3 family. In terms of assembly, monomer.

Its subcellular location is the cytoplasm. Functionally, IF-3 binds to the 30S ribosomal subunit and shifts the equilibrium between 70S ribosomes and their 50S and 30S subunits in favor of the free subunits, thus enhancing the availability of 30S subunits on which protein synthesis initiation begins. The protein is Translation initiation factor IF-3 of Streptomyces coelicolor (strain ATCC BAA-471 / A3(2) / M145).